The following is a 301-amino-acid chain: Probable alpha-L-glutamate ligase (301 aa).

The 184-residue stretch at 104–287 (LQLLSRRGIG…VAGIIIEHIE (184 aa)) folds into the ATP-grasp domain. ATP is bound by residues Lys141, 178-179 (EY), Asp187, and 211-213 (RSN). Positions 248, 260, and 262 each coordinate Mg(2+). Mn(2+) contacts are provided by Asp248, Glu260, and Asn262.

It belongs to the RimK family. The cofactor is Mg(2+). Mn(2+) serves as cofactor.

The polypeptide is Probable alpha-L-glutamate ligase (Pseudomonas fluorescens (strain ATCC BAA-477 / NRRL B-23932 / Pf-5)).